The primary structure comprises 938 residues: Isoleucine--tRNA ligase (938 aa).

The 'HIGH' region signature appears at 58–68 (PYANGHIHLGT). Residue Glu565 participates in L-isoleucyl-5'-AMP binding. The 'KMSKS' region motif lies at 606–610 (KMSKS). Residue Lys609 coordinates ATP. Residues Cys905, Cys908, Cys925, and Cys928 each contribute to the Zn(2+) site.

The protein belongs to the class-I aminoacyl-tRNA synthetase family. IleS type 1 subfamily. Monomer. Zn(2+) is required as a cofactor.

The protein resides in the cytoplasm. It carries out the reaction tRNA(Ile) + L-isoleucine + ATP = L-isoleucyl-tRNA(Ile) + AMP + diphosphate. Catalyzes the attachment of isoleucine to tRNA(Ile). As IleRS can inadvertently accommodate and process structurally similar amino acids such as valine, to avoid such errors it has two additional distinct tRNA(Ile)-dependent editing activities. One activity is designated as 'pretransfer' editing and involves the hydrolysis of activated Val-AMP. The other activity is designated 'posttransfer' editing and involves deacylation of mischarged Val-tRNA(Ile). The polypeptide is Isoleucine--tRNA ligase (Nitratidesulfovibrio vulgaris (strain DSM 19637 / Miyazaki F) (Desulfovibrio vulgaris)).